The chain runs to 1297 residues: MPVNIKXFNYNDPINNDDIIMMEPFNDPGPGTYYKAFRIIDRIWIVPERFTYGFQPDQFNASTGVFSKDVYEYYDPTYLKTDAEKDKFLKTMIKLFNRINSKPSGQRLLDMIVDAIPYLGNASTPPDKFAANVANVSINKKIIQPGAEDQIKGLMTNLIIFGPGPVLSDNFTDSMIMNGHSPISEGFGARMMIRFCPSCLNVFNNVQENKDTSIFSRRAYFADPALTLMHELIHVLHGLYGIKISNLPITPNTKEFFMQHSDPVQAEELYTFGGHDPSVISPSTDMNIYNKALQNFQDIANRLNIVSSAQGSGIDISLYKQIYKNKYDFVEDPNGKYSVDKDKFDKLYKALMFGFTETNLAGEYGIKTRYSYFSEYLPPIKTEKLLDNTIYTQNEGFNIASKNLKTEFNGQNKAVNKEAYEEISLEHLVIYRIAMCKPVMYKNTGKSEQCIIVNNEDLFFIANKDSFSKDLAKAETIAYNTQNNTIENNFSIDQLILDNDLSSGIDLPNENTEPFTNFDDIDIPVYIKQSALKKIFVDGDSLFEYLHAQTFPSNIENLQLTNSLNDALRNNNKVYTFFSTNLVEKANTVVGASLFVNWVKGVIDDFTSESTQKSTIDKVSDVSIIIPYIGPALNVGNETAKENFKNAFEIGGAAILMEFIPELIVPIVGFFTLESYVGNKGHIIMTISNALKKRDQKWTDMYGLIVSQWLSTVNTQFYTIKERMYNALNNQSQAIEKIIEDQYNRYSEEDKMNINIDFNDIDFKLNQSINLAINNIDDFINQCSISYLMNRMIPLAVKKLKDFDDNLKRDLLEYIDTNELYLLDEVNILKSKVNRHLKDSIPFDLSLYTKDTILIQVFNNYISNISSNAILSLSYRGGRLIDSSGYGATMNVGSDVIFNDIGNGQFKLNNSENSNITAHQSKFVVYDSMFDNFSINFWVRTPKYNNNDIQTYLQNEYTIISCIKNDSGWKVSIKGNRIIWTLIDVNAKSKSIFFEYSIKDNISDYINKWFSITITNDRLGNANIYINGSLKKSEKILNLDRINSSNDIDFKLINCTDTTKFVWIKDFNIFGRELNATEVSSLYWIQSSTNTLKDFWGNPLRYDTQYYLFNQGMQNIYIKYFSKASMGETAPRTNFNNAAINYQNLYLGLRFIIKKASNSRNINNDNIVREGDYIYLNIDNISDESYRVYVLVNSKEIQTQLFLAPINDDPTFYDVLQIKKYYEKTTYNCQILCEKDTKTFGLFGIGKFVKDYGYVWDTYDNYFCISQWYLRRISENINKLRLGCNWQFIPVDEGWTE.

His230 contacts Zn(2+). Residue Glu231 is part of the active site. The Zn(2+) site is built by His234 and Glu268. Cys436 and Cys450 form a disulfide bridge. The interval 446–862 (KSEQCIIVNN…ILIQVFNNYI (417 aa)) is translocation domain (TD). The segment at 488 to 537 (NNFSIDQLILDNDLSSGIDLPNENTEPFTNFDDIDIPVYIKQSALKKIFV) is belt. Positions 868-1073 (NAILSLSYRG…IKDFNIFGRE (206 aa)) are N-terminus of receptor binding domain (N-RBD). The C-terminus of receptor binding domain (C-RBD) stretch occupies residues 1089-1297 (TNTLKDFWGN…FIPVDEGWTE (209 aa)). Residues 1266-1269 (SQWY) carry the Host ganglioside-binding motif motif.

The protein belongs to the peptidase M27 family. In terms of assembly, heterodimer; disulfide-linked heterodimer of a light chain (LC) and a heavy chain (HC). The LC has the proteolytic/pharmacological activity, while the N- and C-termini of the HC mediate channel formation and toxin binding, respectively. Interacts with host receptors synaptotagmin-1 and -2 (SYT1 and SYT2). Zn(2+) is required as a cofactor.

It localises to the secreted. The protein resides in the host cytoplasm. The protein localises to the host cytosol. It is found in the host synapse. Its subcellular location is the host presynaptic cell membrane. It localises to the host cytoplasmic vesicle. The protein resides in the host secretory vesicle. The protein localises to the host synaptic vesicle membrane. It catalyses the reaction Limited hydrolysis of proteins of the neuroexocytosis apparatus, synaptobrevins, SNAP25 or syntaxin. No detected action on small molecule substrates.. Botulinum toxin causes flaccid paralysis by inhibiting neurotransmitter (acetylcholine) release from the presynaptic membranes of nerve terminals of the eukaryotic host skeletal and autonomic nervous system, with frequent heart or respiratory failure. Precursor of botulinum neurotoxin G which has 2 coreceptors; complex polysialylated gangliosides found on neural tissue and specific membrane-anchored proteins found in synaptic vesicles. Receptor proteins are exposed on host presynaptic cell membrane during neurotransmitter release, when the toxin heavy chain (HC) binds to them. Upon synaptic vesicle recycling the toxin is taken up via the endocytic pathway. When the pH of the toxin-containing endosome drops a structural rearrangement occurs so that the N-terminus of the HC forms pores that allows the light chain (LC) to translocate into the cytosol. Once in the cytosol the disulfide bond linking the 2 subunits is reduced and LC cleaves its target protein on synaptic vesicles, preventing their fusion with the cytoplasmic membrane and thus neurotransmitter release. Binds to host peripheral neuronal presynaptic membranes via synaptotagmins 1 and 2 (SYT1 and SYT2). Toxin binds to the membrane proximal extra-cytoplasmic region of SYT1 and SYT2 that is transiently exposed outside of cells during exocytosis; exogenous gangliosides do not enhance binding and subsequent uptake of toxin into host cells. Toxin activity can be blocked by the appropriate synaptotagmin protein fragments in cell culture. Its function is as follows. Has proteolytic activity. After translocation into the eukaryotic host cytosol acts as a zinc endopeptidase that cleaves synaptobrevins-1, -2 and -3 (also called VAMP1, VAMP2 and VAMP3). Hydrolyzes the '81-Ala-|-Ala-82' bond of VAMP2, and probably also the equivalent 'Ala-|-Ala' sites in VAMP1 and VAMP3. Has low activity on A.californica synaptobrevin and none on D.melanogaster synaptobrevin or cellubrevin, have a slightly different sequence. In terms of biological role, responsible for host cell targeting and translocation of light chain (LC) into host cytosol. Composed of 3 subdomains; the translocation domain (TD), and N-terminus and C-terminus of the receptor-binding domain (N-RBD, C-RBD). The RBD is responsible for the adherence of the toxin to the cell surface. It simultaneously recognizes 2 coreceptors; polysialated gangliosides and the receptor proteins SYT1 and SYT2 in close proximity on host synaptic vesicles. The N-terminus of the TD wraps an extended belt around the perimeter of the LC, protecting Zn(2+) in the active site; it may also prevent premature LC dissociation from the translocation channel and protect toxin prior to translocation. The TD inserts into synaptic vesicle membrane to allow translocation into the host cytosol. Has 2 coreceptors; complex gangliosides found primarily on neural tissue and host synaptotagmin-1 and -2 (SYT1 and SYT2) which bind to separate sites at the tip of the HC. HC alone binds to host receptors SYT1 and SYT2; C-RBD interacts with host SYT2. Has equal affinity for SYT1 and SYT2; gangliosides are not required for (or only very slightly improve) binding to a membrane-anchored receptor fragment. Has also been shown to only bind SYT1; the assay methods were different. Binds ganglioside GT1b. Significantly decreases uptake and toxicity of whole BoNT/B and BoNT/G. The chain is Botulinum neurotoxin type G (botG) from Clostridium botulinum.